A 350-amino-acid chain; its full sequence is Membrane progestin receptor alpha (350 aa).

The Cytoplasmic segment spans residues 1 to 80 (MATMVAQKLS…HNEAVNVWTH (80 aa)). The helical transmembrane segment at 81 to 101 (LLAALVLLLRLAIFVGTVDFW) threads the bilayer. Residues 102-105 (GDPH) lie on the Extracellular side of the membrane. A helical membrane pass occupies residues 106–126 (ALPLFIIVLASFTYLSLSALA). At 127–139 (HLLQAKSEFWHYS) the chain is on the cytoplasmic side. Residues 140–160 (FFFLDYVGVAVYQFGSALAHF) form a helical membrane-spanning segment. Residues 161–165 (YYAIE) lie on the Extracellular side of the membrane. A helical membrane pass occupies residues 166 to 186 (PAWHAQVQTIFLPMAAFLAWL). Residues 187–239 (SCTGSCYNKYIQKPGLLGRTCQEVPSALAYALDISPVAHRILASPEPATDDPA) are Cytoplasmic-facing. Residues 240 to 260 (LLYHKCQVVFFLLAAAFFSAF) traverse the membrane as a helical segment. Over 261–278 (MPERWFPGSCHIFGQGHQ) the chain is Extracellular. The helical transmembrane segment at 279–299 (LFHVFLVLCTLAQLEAVALDY) threads the bilayer. The Cytoplasmic segment spans residues 300–318 (EARRPIYEPLHTRWPHNFS). The chain crosses the membrane as a helical span at residues 319-339 (GLFLLTVGSSILTAFLLSQLV). Residues 340–350 (RRKLDLDRKTQ) are Extracellular-facing.

The protein belongs to the ADIPOR family.

The protein resides in the cell membrane. Its function is as follows. Plasma membrane progesterone (P4) receptor coupled to G proteins. Seems to act through a G(i) mediated pathway. May be involved in oocyte maturation. Involved in neurosteroid inhibition of apoptosis. Also binds dehydroepiandrosterone (DHEA), pregnanolone, pregnenolone and allopregnanolone. The protein is Membrane progestin receptor alpha (PAQR7) of Sus scrofa (Pig).